The chain runs to 264 residues: Proteasome assembly chaperone 2 (264 aa).

Residue Thr137 is modified to Phosphothreonine.

It belongs to the PSMG2 family. Forms a heterodimer with PSMG1. The PSMG1-PSMG2 heterodimer interacts directly with the PSMA5 and PSMA7 proteasome alpha subunits. In terms of processing, degraded by the proteasome upon completion of 20S proteasome maturation.

It is found in the nucleus. Chaperone protein which promotes assembly of the 20S proteasome as part of a heterodimer with PSMG1. The PSMG1-PSMG2 heterodimer binds to the PSMA5 and PSMA7 proteasome subunits, promotes assembly of the proteasome alpha subunits into the heteroheptameric alpha ring and prevents alpha ring dimerization. This Bos taurus (Bovine) protein is Proteasome assembly chaperone 2.